Here is a 368-residue protein sequence, read N- to C-terminus: MKDLFRISGVTHFELPLLPNNIPFACHPEFQSISLKIDKWFLGKMRIADETSKKKVLESRIGLYACMMHPHAKREKLVLAGKHLWAVFLLDDLLESSSKHEMPQLNLTISNLANGNSDEDYTNPLLALYREVMEEIRAAMEPPLLDRYVQCVGASLEAVKDQVHRRAEKSIPGVEEYKLARRATGFMEAVGGIMTEFCIGIRLSQAQIQSPIFRELLNSVSDHVILVNDLLSFRKEFYGGDYHHNWISVLLHHSPRGTSFQDVVDRLCEMIQAEELSILALRKKIADEEGSDSELTKFAREFPMVASGSLVWSYVTGRYHGYGNPLLTGEIFSGTWLLHPMATVVLPSKFRMDTMRFSLAPKKRDSFP.

D91, N228, and S232 together coordinate Mg(2+). Positions 91–95 match the DDXXE motif motif; the sequence is DDLLE.

The protein belongs to the terpene synthase family. Mg(2+) serves as cofactor. It depends on Mn(2+) as a cofactor.

The catalysed reaction is (2E,6E)-farnesyl diphosphate + H2O = (3S,6E)-nerolidol + diphosphate. It carries out the reaction (2E)-geranyl diphosphate + H2O = (S)-linalool + diphosphate. It functions in the pathway secondary metabolite biosynthesis; terpenoid biosynthesis. Functionally, sesquiterpene synthase converting farnesyl diphosphate to nerolidol. Also has a monoterpene synthase activity, converting geranyl diphosphate into linalool as the major product. Has no diterpene synthase activity. This Selaginella moellendorffii (Spikemoss) protein is (3S,6E)-nerolidol synthase.